The following is a 191-amino-acid chain: UPF0312 protein Sputw3181_1309 (191 aa).

A signal peptide spans 1-22 (MKKQLLSALIGVSLLVPMAASA).

This sequence belongs to the UPF0312 family. Type 1 subfamily.

It is found in the periplasm. This is UPF0312 protein Sputw3181_1309 from Shewanella sp. (strain W3-18-1).